Here is a 366-residue protein sequence, read N- to C-terminus: tRNA pseudouridine synthase B (366 aa).

The active-site Nucleophile is the aspartate 44.

Belongs to the pseudouridine synthase TruB family. Type 1 subfamily.

The catalysed reaction is uridine(55) in tRNA = pseudouridine(55) in tRNA. In terms of biological role, responsible for synthesis of pseudouridine from uracil-55 in the psi GC loop of transfer RNAs. This is tRNA pseudouridine synthase B from Treponema pallidum (strain Nichols).